The primary structure comprises 230 residues: 2,3-bisphosphoglycerate-dependent phosphoglycerate mutase (230 aa).

Substrate is bound by residues 8–15 (RHGESEWN), 21–22 (TG), R60, 87–90 (ERHY), K98, 114–115 (RR), and 183–184 (GN). H9 acts as the Tele-phosphohistidine intermediate in catalysis. Catalysis depends on E87, which acts as the Proton donor/acceptor.

The protein belongs to the phosphoglycerate mutase family. BPG-dependent PGAM subfamily.

It catalyses the reaction (2R)-2-phosphoglycerate = (2R)-3-phosphoglycerate. The protein operates within carbohydrate degradation; glycolysis; pyruvate from D-glyceraldehyde 3-phosphate: step 3/5. Catalyzes the interconversion of 2-phosphoglycerate and 3-phosphoglycerate. This is 2,3-bisphosphoglycerate-dependent phosphoglycerate mutase from Streptococcus sanguinis (strain SK36).